Consider the following 127-residue polypeptide: Aspartate 1-decarboxylase (127 aa).

Catalysis depends on Ser25, which acts as the Schiff-base intermediate with substrate; via pyruvic acid. Pyruvic acid (Ser) is present on Ser25. Thr57 is a substrate binding site. The active-site Proton donor is Tyr58. Position 73 to 75 (73 to 75 (GAA)) interacts with substrate.

This sequence belongs to the PanD family. In terms of assembly, heterooctamer of four alpha and four beta subunits. It depends on pyruvate as a cofactor. Post-translationally, is synthesized initially as an inactive proenzyme, which is activated by self-cleavage at a specific serine bond to produce a beta-subunit with a hydroxyl group at its C-terminus and an alpha-subunit with a pyruvoyl group at its N-terminus.

The protein localises to the cytoplasm. It carries out the reaction L-aspartate + H(+) = beta-alanine + CO2. The protein operates within cofactor biosynthesis; (R)-pantothenate biosynthesis; beta-alanine from L-aspartate: step 1/1. Its function is as follows. Catalyzes the pyruvoyl-dependent decarboxylation of aspartate to produce beta-alanine. The sequence is that of Aspartate 1-decarboxylase from Halalkalibacterium halodurans (strain ATCC BAA-125 / DSM 18197 / FERM 7344 / JCM 9153 / C-125) (Bacillus halodurans).